We begin with the raw amino-acid sequence, 125 residues long: MPKTQRGIYHNLKESEYVASNTDVTFFFSSELYLNKFLDGYQEYRKKFNKKIERVAVTPWNMDMLADITFYSEVEKRGFHAWLKGDNATWREVHVYALRIMTKPNTLDWSRIQKPRLRERRKSMV.

The H-T-H motif DNA-binding region spans 77–96 (RGFHAWLKGDNATWREVHVY).

This sequence belongs to the phi29likevirus late genes activator p4 family. In terms of assembly, interacts with host RNA polymerase (via C-terminus). Interacts with DNA; binds to the A2b, A2c and A3 promoters. Interacts (via C-terminus) with the histone-like protein p6.

Functionally, mediates, together with protein p6, the early to late transcriptional switch by stabilizing the binding of host RNA polymerase (RNAP) to the late A3 promoter. Activates transcription from the late A3 promoter and represses the main early promoters A2b and A2c by modifying the topology of the sequences encompassing early promoters A2c and A2b and late promoter A3 in a hairpin. Proteins p6 and p4 bind cooperatively to an approximately 200 bp DNA region located between the late A3 and the early A2c promoters. Binding of p4 molecules induces the reorganization of the binding of protein p6, giving rise to the nucleoprotein complex responsible for the switch from early to late transcription. The chain is Late genes activator p4 (4) from Bacillus phage phi29 (Bacteriophage phi-29).